The primary structure comprises 1097 residues: RecBCD enzyme subunit RecC (1097 aa).

The protein belongs to the RecC family. Heterotrimer of RecB, RecC and RecD. All subunits contribute to DNA-binding.

A helicase/nuclease that prepares dsDNA breaks (DSB) for recombinational DNA repair. Binds to DSBs and unwinds DNA via a highly rapid and processive ATP-dependent bidirectional helicase activity. Holoenzyme degrades any linearized DNA that is unable to undergo homologous recombination. In the holoenzyme this subunit recognizes the wild-type Chi sequence, and when added to isolated RecB increases its ATP-dependent helicase processivity. Unlike the case in E.coli, suppresses RecA-dependent homologous recombination, is instead required for single-strand annealing pathway repair of DSB. This Mycobacterium tuberculosis (strain ATCC 25618 / H37Rv) protein is RecBCD enzyme subunit RecC.